Here is a 285-residue protein sequence, read N- to C-terminus: BAG family molecular chaperone regulator 2 (285 aa).

One can recognise a Ubiquitin-like domain in the interval 37–113 (RGIRVRVKYG…LILIEDPISQ (77 aa)). A BAG domain is found at 132-210 (AISDISFQVE…KYVEALDLLK (79 aa)). At Ser244 the chain carries Phosphoserine.

As to quaternary structure, binds to the ATPase domain of HSP70/HSC70 chaperones.

Co-chaperone that regulates diverse cellular pathways, such as programmed cell death and stress responses. This is BAG family molecular chaperone regulator 2 (BAG2) from Arabidopsis thaliana (Mouse-ear cress).